Here is a 117-residue protein sequence, read N- to C-terminus: MSSEIPPQVQNQLAQLQQVQQQAQALAMQKNQMESMKKESEMALEELEKLSDDAIVYRAVGDLQIQSNKDDTVAKLKERLETLSLRLQSITRQEERISKRFTQLQEQLKQAMGTQGQ.

Belongs to the prefoldin subunit beta family. Heterohexamer of two alpha and four beta subunits.

It localises to the cytoplasm. Its function is as follows. Molecular chaperone capable of stabilizing a range of proteins. Seems to fulfill an ATP-independent, HSP70-like function in archaeal de novo protein folding. This chain is Prefoldin subunit beta, found in Methanococcoides burtonii (strain DSM 6242 / NBRC 107633 / OCM 468 / ACE-M).